We begin with the raw amino-acid sequence, 407 residues long: Peptidase T (407 aa).

Position 82 (His82) interacts with Zn(2+). The active site involves Asp84. Asp143 is a binding site for Zn(2+). Glu177 (proton acceptor) is an active-site residue. Zn(2+) is bound by residues Glu178, Asp200, and His382.

The protein belongs to the peptidase M20B family. Zn(2+) serves as cofactor.

The protein localises to the cytoplasm. It carries out the reaction Release of the N-terminal residue from a tripeptide.. Functionally, cleaves the N-terminal amino acid of tripeptides. This is Peptidase T from Streptococcus pyogenes serotype M3 (strain ATCC BAA-595 / MGAS315).